The sequence spans 349 residues: Heat-inducible transcription repressor HrcA (349 aa).

This sequence belongs to the HrcA family.

Negative regulator of class I heat shock genes (grpE-dnaK-dnaJ and groELS operons). Prevents heat-shock induction of these operons. The chain is Heat-inducible transcription repressor HrcA from Mycoplasmoides gallisepticum (strain R(low / passage 15 / clone 2)) (Mycoplasma gallisepticum).